Consider the following 378-residue polypeptide: Erythronate-4-phosphate dehydrogenase (378 aa).

2 residues coordinate substrate: S45 and T66. NAD(+) contacts are provided by D146 and T175. R208 is a catalytic residue. NAD(+) is bound at residue D232. E237 is an active-site residue. H254 functions as the Proton donor in the catalytic mechanism. G257 provides a ligand contact to NAD(+). Y258 contributes to the substrate binding site.

This sequence belongs to the D-isomer specific 2-hydroxyacid dehydrogenase family. PdxB subfamily. In terms of assembly, homodimer.

It localises to the cytoplasm. The enzyme catalyses 4-phospho-D-erythronate + NAD(+) = (R)-3-hydroxy-2-oxo-4-phosphooxybutanoate + NADH + H(+). The protein operates within cofactor biosynthesis; pyridoxine 5'-phosphate biosynthesis; pyridoxine 5'-phosphate from D-erythrose 4-phosphate: step 2/5. Catalyzes the oxidation of erythronate-4-phosphate to 3-hydroxy-2-oxo-4-phosphonooxybutanoate. The chain is Erythronate-4-phosphate dehydrogenase from Escherichia coli (strain K12 / MC4100 / BW2952).